A 333-amino-acid chain; its full sequence is Lipoyl synthase (333 aa).

The disordered stretch occupies residues 1 to 29; that stretch reads MTDSAAGATEVATPATPSNKPYDATAKQK. Positions 80, 85, 91, 106, 110, 113, and 320 each coordinate [4Fe-4S] cluster. The 219-residue stretch at 91-309 folds into the Radical SAM core domain; it reads CFGKGTATFM…EEKAYEMGFT (219 aa).

This sequence belongs to the radical SAM superfamily. Lipoyl synthase family. It depends on [4Fe-4S] cluster as a cofactor.

Its subcellular location is the cytoplasm. The catalysed reaction is [[Fe-S] cluster scaffold protein carrying a second [4Fe-4S](2+) cluster] + N(6)-octanoyl-L-lysyl-[protein] + 2 oxidized [2Fe-2S]-[ferredoxin] + 2 S-adenosyl-L-methionine + 4 H(+) = [[Fe-S] cluster scaffold protein] + N(6)-[(R)-dihydrolipoyl]-L-lysyl-[protein] + 4 Fe(3+) + 2 hydrogen sulfide + 2 5'-deoxyadenosine + 2 L-methionine + 2 reduced [2Fe-2S]-[ferredoxin]. The protein operates within protein modification; protein lipoylation via endogenous pathway; protein N(6)-(lipoyl)lysine from octanoyl-[acyl-carrier-protein]: step 2/2. Its function is as follows. Catalyzes the radical-mediated insertion of two sulfur atoms into the C-6 and C-8 positions of the octanoyl moiety bound to the lipoyl domains of lipoate-dependent enzymes, thereby converting the octanoylated domains into lipoylated derivatives. This Ralstonia pickettii (strain 12J) protein is Lipoyl synthase.